The chain runs to 123 residues: UPF0738 protein BCE33L1094 (123 aa).

Belongs to the UPF0738 family.

The sequence is that of UPF0738 protein BCE33L1094 from Bacillus cereus (strain ZK / E33L).